Consider the following 408-residue polypeptide: Putative polysaccharide ligase RBE_0399 (408 aa).

The next 10 helical transmembrane spans lie at 5–25 (FFIFLVPSLGMVAGLSVAATV), 72–92 (MTIKTELLFAGWCLISCLFAI), 94–114 (PINSLINFVQVFTILFLGFVV), 130–150 (LIFGTLTGILLFFVEYFSYGF), 163–183 (MLDRGCALLSITAWVVIAILI), 192–212 (LILYILVLYLLSISDSLASFL), 230–250 (IFSKLIIFGLITGSLLFPIIA), 325–345 (ILQITLELGLIGLALFLSLVY), 359–377 (FRASSYACFINYYIIGMIS), and 380–400 (VWQIWWIASSIWVLILMKLLV).

This sequence belongs to the O-antigen ligase family.

The protein localises to the membrane. The polypeptide is Putative polysaccharide ligase RBE_0399 (rfaL) (Rickettsia bellii (strain RML369-C)).